The following is a 132-amino-acid chain: Glycine cleavage system H protein (132 aa).

One can recognise a Lipoyl-binding domain in the interval isoleucine 24–arginine 106. N6-lipoyllysine is present on lysine 65.

The protein belongs to the GcvH family. As to quaternary structure, the glycine cleavage system is composed of four proteins: P, T, L and H. Requires (R)-lipoate as cofactor.

The glycine cleavage system catalyzes the degradation of glycine. The H protein shuttles the methylamine group of glycine from the P protein to the T protein. The protein is Glycine cleavage system H protein of Picosynechococcus sp. (strain ATCC 27264 / PCC 7002 / PR-6) (Agmenellum quadruplicatum).